Here is a 233-residue protein sequence, read N- to C-terminus: MEDDEKCREFWSRVAESQGFDVEHLMDDKPKSCLLDYQNSDFDTEVFLNAKLGIHKYNMLQGTNLQLSCIEKCNSRITTVCIGYYITLVAKDPSAGGSLVTFQTKVVHEDYSKINTLTVYLARLKSQPPPDEEIGGAKTGLGSSILGTCIHPCKSVSSKSVETEENVKQPNERLKARNAVFYIRYRYYPNKGRAPKGNGHKPPRDRIAIIKRTMDIQGLLTLEFDTRYAKTLL.

It belongs to the UPF0725 (EMB2204) family.

This is UPF0725 protein At4g17990 from Arabidopsis thaliana (Mouse-ear cress).